Here is a 112-residue protein sequence, read N- to C-terminus: Large ribosomal subunit protein uL22 (112 aa).

The protein belongs to the universal ribosomal protein uL22 family. Part of the 50S ribosomal subunit.

Functionally, this protein binds specifically to 23S rRNA; its binding is stimulated by other ribosomal proteins, e.g. L4, L17, and L20. It is important during the early stages of 50S assembly. It makes multiple contacts with different domains of the 23S rRNA in the assembled 50S subunit and ribosome. Its function is as follows. The globular domain of the protein is located near the polypeptide exit tunnel on the outside of the subunit, while an extended beta-hairpin is found that lines the wall of the exit tunnel in the center of the 70S ribosome. The chain is Large ribosomal subunit protein uL22 from Nitratidesulfovibrio vulgaris (strain ATCC 29579 / DSM 644 / CCUG 34227 / NCIMB 8303 / VKM B-1760 / Hildenborough) (Desulfovibrio vulgaris).